Reading from the N-terminus, the 394-residue chain is Phloroisovalerophenone synthase (394 aa).

Cys-166 is an active-site residue.

Belongs to the thiolase-like superfamily. Chalcone/stilbene synthases family. Homodimer. In terms of tissue distribution, expressed in lupulin gland. Present at low levels in leaves but accumulates in cones.

The catalysed reaction is 3-methylbutanoyl-CoA + 3 malonyl-CoA + 3 H(+) = phlorisovalerophenone + 3 CO2 + 4 CoA. It carries out the reaction (E)-4-coumaroyl-CoA + 3 malonyl-CoA + 3 H(+) = 2',4,4',6'-tetrahydroxychalcone + 3 CO2 + 4 CoA. It catalyses the reaction 2-methylpropanoyl-CoA + 3 malonyl-CoA + 3 H(+) = phlorisobutanophenone + 3 CO2 + 4 CoA. It functions in the pathway secondary metabolite biosynthesis. Its function is as follows. Involved in the biosynthesis of prenylated phenolics natural products which contribute to the bitter taste of beer and display broad biological activities. Polyketide synthase that can use 3-methylbutanoyl-CoA (isovaleryl-CoA) and 2-methylpropanoyl-CoA (isobutyryl-CoA) as substrates to produce phlorisovalerophenone (PIVP) and phlorisobutyrophenone (2-methyl-1-(2,4,6-trihydroxyphenyl)propan-1-one), respectively, intermediates in the biosynthesis of the bitter acids (alpha and beta) acids. Can also produce naringenin-chalcone (2',4,4',6'-tetrahydroxychalcone) from 4-coumaroyl-CoA with a lower efficiency. The polypeptide is Phloroisovalerophenone synthase (Humulus lupulus (European hop)).